The chain runs to 209 residues: ATP synthase subunit b 2 (209 aa).

Residues 9-29 traverse the membrane as a helical segment; it reads WWGWVTLSVLVMVAGDGTLAF.

It belongs to the ATPase B chain family. As to quaternary structure, F-type ATPases have 2 components, F(1) - the catalytic core - and F(0) - the membrane proton channel. F(1) has five subunits: alpha(3), beta(3), gamma(1), delta(1), epsilon(1). F(0) has three main subunits: a(1), b(2) and c(10-14). The alpha and beta chains form an alternating ring which encloses part of the gamma chain. F(1) is attached to F(0) by a central stalk formed by the gamma and epsilon chains, while a peripheral stalk is formed by the delta and b chains.

The protein resides in the cell inner membrane. In terms of biological role, f(1)F(0) ATP synthase produces ATP from ADP in the presence of a proton or sodium gradient. F-type ATPases consist of two structural domains, F(1) containing the extramembraneous catalytic core and F(0) containing the membrane proton channel, linked together by a central stalk and a peripheral stalk. During catalysis, ATP synthesis in the catalytic domain of F(1) is coupled via a rotary mechanism of the central stalk subunits to proton translocation. Functionally, component of the F(0) channel, it forms part of the peripheral stalk, linking F(1) to F(0). The polypeptide is ATP synthase subunit b 2 (Desulfosudis oleivorans (strain DSM 6200 / JCM 39069 / Hxd3) (Desulfococcus oleovorans)).